The primary structure comprises 189 residues: Large ribosomal subunit protein bL9 (189 aa).

It belongs to the bacterial ribosomal protein bL9 family.

Binds to the 23S rRNA. The sequence is that of Large ribosomal subunit protein bL9 from Methylocella silvestris (strain DSM 15510 / CIP 108128 / LMG 27833 / NCIMB 13906 / BL2).